The chain runs to 618 residues: Poly(A)-specific ribonuclease PARN-like (618 aa).

A divalent metal cation-binding residues include serine 54, glutamine 56, aspartate 332, and asparagine 418. Residues 588–607 (ALESSDTDPDSDTKPSEIDW) are disordered.

Belongs to the CAF1 family. A divalent metal cation is required as a cofactor.

It is found in the nucleus. Its subcellular location is the cytoplasm. It carries out the reaction Exonucleolytic cleavage of poly(A) to 5'-AMP.. In terms of biological role, 3'-exoribonuclease that has a preference for poly(A) tails of mRNAs, thereby efficiently degrading poly(A) tails. Exonucleolytic degradation of the poly(A) tail is often the first step in the decay of eukaryotic mRNAs. The protein is Poly(A)-specific ribonuclease PARN-like of Arabidopsis thaliana (Mouse-ear cress).